The primary structure comprises 275 residues: Exosome complex component Rrp42 (275 aa).

Belongs to the RNase PH family. Rrp42 subfamily. Component of the archaeal exosome complex. Forms a hexameric ring-like arrangement composed of 3 Rrp41-Rrp42 heterodimers. The hexameric ring associates with a trimer of Rrp4 and/or Csl4 subunits.

Its subcellular location is the cytoplasm. Non-catalytic component of the exosome, which is a complex involved in RNA degradation. Contributes to the structuring of the Rrp41 active site. The sequence is that of Exosome complex component Rrp42 from Sulfurisphaera tokodaii (strain DSM 16993 / JCM 10545 / NBRC 100140 / 7) (Sulfolobus tokodaii).